The sequence spans 233 residues: UPF0758 protein Rcas_0037 (233 aa).

The 123-residue stretch at Gln-107–Ala-229 folds into the MPN domain. His-178, His-180, and Asp-191 together coordinate Zn(2+). A JAMM motif motif is present at residues His-178–Asp-191.

It belongs to the UPF0758 family.

In Roseiflexus castenholzii (strain DSM 13941 / HLO8), this protein is UPF0758 protein Rcas_0037.